Here is a 267-residue protein sequence, read N- to C-terminus: Farnesyl diphosphate phosphatase YisP (267 aa).

It belongs to the phytoene/squalene synthase family. In terms of assembly, monomer.

The catalysed reaction is (2E,6E)-farnesyl diphosphate + H2O = (2E,6E)-farnesol + diphosphate. With respect to regulation, diphosphate release from FPP is inhibited by zaragozic acid. In terms of biological role, a farnesyl diphosphate (FPP) phosphatase. Involved in biofilm formation, its disruption blocks biofilm synthesis which is restored by exogenous farnesol. Releases diphosphate from FPP, was initally suggested to be a squalene synthase. Diphosphate release is higher from FPP than geranyl pyrophosphate (GPP) or geranylgeranyl pyrophosphate (GGPP). Biofilm synthesis is partially restored by exogenous squalene, beta-carotene or retinol. Required for integrity of cell membrane lipid rafts. Involved in spatial organization of membranes, required for the flotillin-like proteins FloT and FloA to function correctly. The chain is Farnesyl diphosphate phosphatase YisP (yisP) from Bacillus subtilis (strain 168).